The chain runs to 407 residues: Arginine deiminase (407 aa).

Cys-397 functions as the Amidino-cysteine intermediate in the catalytic mechanism.

This sequence belongs to the arginine deiminase family.

It localises to the cytoplasm. It carries out the reaction L-arginine + H2O = L-citrulline + NH4(+). The protein operates within amino-acid degradation; L-arginine degradation via ADI pathway; carbamoyl phosphate from L-arginine: step 1/2. This chain is Arginine deiminase, found in Pediococcus pentosaceus (strain ATCC 25745 / CCUG 21536 / LMG 10740 / 183-1w).